The primary structure comprises 351 residues: Peptide chain release factor 1 (351 aa).

N5-methylglutamine is present on glutamine 229.

It belongs to the prokaryotic/mitochondrial release factor family. Post-translationally, methylated by PrmC. Methylation increases the termination efficiency of RF1.

It is found in the cytoplasm. Functionally, peptide chain release factor 1 directs the termination of translation in response to the peptide chain termination codons UAG and UAA. This chain is Peptide chain release factor 1, found in Dinoroseobacter shibae (strain DSM 16493 / NCIMB 14021 / DFL 12).